The sequence spans 290 residues: Beta carbonic anhydrase 6, mitochondrial (290 aa).

The N-terminal 20 residues, 1-20 (MAFTLGGRARRLVSATSVHQ), are a transit peptide targeting the mitochondrion. Serine 122 bears the Phosphoserine mark. An S-nitrosocysteine modification is found at cysteine 226.

Belongs to the beta-class carbonic anhydrase family. In terms of tissue distribution, strongly expressed in aerial tissues including leaves, stems, flowers and siliques, and, to a lower extent, in roots. Accumulates in guard cells.

It is found in the mitochondrion. It carries out the reaction hydrogencarbonate + H(+) = CO2 + H2O. Functionally, reversible hydration of carbon dioxide. The protein is Beta carbonic anhydrase 6, mitochondrial (BCA6) of Arabidopsis thaliana (Mouse-ear cress).